Reading from the N-terminus, the 157-residue chain is Cytochrome b6-f complex subunit 4 (157 aa).

Transmembrane regions (helical) follow at residues 35-55 (ILYIFPVVILGTISFSLGLGV), 94-114 (LVGVLSLASVPVILVLTAFIE), and 130-150 (LVYLTSTCYALWLGYGSVLGI).

The protein belongs to the cytochrome b family. PetD subfamily. In terms of assembly, the 4 large subunits of the cytochrome b6-f complex are cytochrome b6, subunit IV (17 kDa polypeptide, petD), cytochrome f and the Rieske protein, while the 4 small subunits are petG, petL, petM and petN. The complex functions as a dimer.

The protein resides in the plastid. It is found in the chloroplast thylakoid membrane. Component of the cytochrome b6-f complex, which mediates electron transfer between photosystem II (PSII) and photosystem I (PSI), cyclic electron flow around PSI, and state transitions. In Amphidinium carterae (Dinoflagellate), this protein is Cytochrome b6-f complex subunit 4.